The following is a 504-amino-acid chain: L-carnitine/gamma-butyrobetaine antiporter (504 aa).

12 helical membrane passes run 10–30 (MEPK…WLTV), 51–71 (WGWA…WLVF), 92–112 (IFMM…SIEI), 143–163 (GPLP…FFFV), 195–215 (FYLV…TPLV), 231–251 (LDAI…ACGL), 263–283 (SYLS…SFIM), 316–336 (WSVF…IFLA), 347–367 (LCFG…TVLG), 398–418 (WAAL…CFIA), 446–466 (LLVR…LLAL), and 475–495 (AIIA…LSFI).

This sequence belongs to the BCCT transporter (TC 2.A.15) family. CaiT subfamily. As to quaternary structure, homotrimer.

It is found in the cell inner membrane. The enzyme catalyses 4-(trimethylamino)butanoate(in) + (R)-carnitine(out) = 4-(trimethylamino)butanoate(out) + (R)-carnitine(in). Its pathway is amine and polyamine metabolism; carnitine metabolism. In terms of biological role, catalyzes the exchange of L-carnitine for gamma-butyrobetaine. The sequence is that of L-carnitine/gamma-butyrobetaine antiporter from Shigella dysenteriae serotype 1 (strain Sd197).